Consider the following 946-residue polypeptide: Inter-alpha-trypsin inhibitor heavy chain H2 (946 aa).

An N-terminal signal peptide occupies residues 1–18; the sequence is MQRPVCLLIWLFLLEAQA. Residues 19–54 constitute a propeptide that is removed on maturation; that stretch reads FEIPINGNSEFAEYSDLVELAPDKLPFVQENGRHQR. The VIT domain occupies 56-185; that stretch reads LPEESGEETD…KVQFELHYQE (130 aa). Residue Ser-60 is modified to Phosphoserine. Asn-118 and Asn-263 each carry an N-linked (GlcNAc...) asparagine glycan. Glu-282 and Glu-283 each carry 4-carboxyglutamate. Residues 308 to 468 enclose the VWFA domain; sequence PKNILFVIDV…YDFLKRLSNE (161 aa). Asn-445 carries an N-linked (GlcNAc...) asparagine glycan. Ser-466 carries the phosphoserine modification. Asp-702 is modified (aspartate 1-(chondroitin 4-sulfate)-ester). Residues 703-946 constitute a propeptide that is removed on maturation; it reads PHFIIYLPKS…PQLYSFLKRP (244 aa). At Ser-886 the chain carries Phosphoserine.

The protein belongs to the ITIH family. I-alpha-I plasma protease inhibitors are assembled from one or two heavy chains (HC) and one light chain, bikunin. Inter-alpha-inhibitor (I-alpha-I) is composed of ITIH1/HC1, ITIH2/HC2 and bikunin. Post-translationally, heavy chains are linked to bikunin via chondroitin 4-sulfate esterified to the alpha-carboxyl of the C-terminal aspartate after propeptide cleavage. In terms of processing, phosphorylated by FAM20C in the extracellular medium. As to expression, expressed in both liver and brain.

It localises to the secreted. Its function is as follows. May act as a carrier of hyaluronan in serum or as a binding protein between hyaluronan and other matrix protein, including those on cell surfaces in tissues to regulate the localization, synthesis and degradation of hyaluronan which are essential to cells undergoing biological processes. The chain is Inter-alpha-trypsin inhibitor heavy chain H2 (Itih2) from Mus musculus (Mouse).